The primary structure comprises 238 residues: Gem-associated protein 8 (238 aa).

The tract at residues 66–127 is disordered; that stretch reads AGHPWDSQGQ…LESDSDDEVE (62 aa). Polar residues-rich tracts occupy residues 72–82 and 96–108; these read SQGQHMAQQES and LRNS…STRG. Residues 113–127 show a composition bias toward acidic residues; that stretch reads CEEEELESDSDDEVE. Ser122 bears the Phosphoserine mark. A coiled-coil region spans residues 131 to 164; sequence SNMEITEELRQYFAQTERHREERRRQQQLDAERL.

As to quaternary structure, part of the core SMN complex that contains SMN1, GEMIN2/SIP1, DDX20/GEMIN3, GEMIN4, GEMIN5, GEMIN6, GEMIN7, GEMIN8 and STRAP/UNRIP. Part of the SMN-Sm complex that contains SMN1, GEMIN2/SIP1, DDX20/GEMIN3, GEMIN4, GEMIN5, GEMIN6, GEMIN7, GEMIN8, STRAP/UNRIP and the Sm proteins SNRPB, SNRPD1, SNRPD2, SNRPD3, SNRPE, SNRPF and SNRPG. Interacts with GEMIN6; the interaction is direct. Interacts with GEMIN7; the interaction is direct. Interacts with SMN1; the interaction is direct. Interacts with GEMIN4; the interaction is direct. Widely expressed in embryonic tissues (at protein level).

The protein resides in the nucleus. It is found in the gem. It localises to the cytoplasm. In terms of biological role, the SMN complex catalyzes the assembly of small nuclear ribonucleoproteins (snRNPs), the building blocks of the spliceosome, and thereby plays an important role in the splicing of cellular pre-mRNAs. Most spliceosomal snRNPs contain a common set of Sm proteins SNRPB, SNRPD1, SNRPD2, SNRPD3, SNRPE, SNRPF and SNRPG that assemble in a heptameric protein ring on the Sm site of the small nuclear RNA to form the core snRNP (Sm core). In the cytosol, the Sm proteins SNRPD1, SNRPD2, SNRPE, SNRPF and SNRPG are trapped in an inactive 6S pICln-Sm complex by the chaperone CLNS1A that controls the assembly of the core snRNP. To assemble core snRNPs, the SMN complex accepts the trapped 5Sm proteins from CLNS1A forming an intermediate. Binding of snRNA inside 5Sm triggers eviction of the SMN complex, thereby allowing binding of SNRPD3 and SNRPB to complete assembly of the core snRNP. The chain is Gem-associated protein 8 (Gemin8) from Mus musculus (Mouse).